Consider the following 323-residue polypeptide: MNKILFYLFVYAVVKSAAYDPLKAPNYFEEFVHRFNKNYSSEVEKLRRFKIFQHNLNEIINKNQNDSAKYEINKFSDLSKDETIAKYTGLSLPTQTQNFCKVILLDQPPGKGPLEFDWRRLNKVTSVKNQGMCGACWAFATLGSLESQFAIKHNELINLSEQQMIDCDFVDAGCNGGLLHTAFEAIIKMGGVQLESDYPYEADNNNCRMNSNKFLVQVKDCYRYIIVYEEKLKDLLPLVGPIPMAIDAADIVNYKQGIIKYCFDSGLNHAVLLVGYGVENNIPYWTFKNTWGTDWGEDGFFRVQQNINACGMRNELASTAVIY.

Residues 1–16 (MNKILFYLFVYAVVKS) form the signal peptide. Positions 17 to 112 (AAYDPLKAPN…ILLDQPPGKG (96 aa)) are cleaved as a propeptide — activation peptide. 3 disulfides stabilise this stretch: Cys-133–Cys-174, Cys-167–Cys-207, and Cys-262–Cys-310. The active site involves Cys-136. Residue Asn-158 is glycosylated (N-linked (GlcNAc...) asparagine; by host). Residues His-269 and Asn-289 contribute to the active site.

Belongs to the peptidase C1 family. Synthesized as an inactive proenzyme and activated by proteolytic removal of the inhibitory propeptide.

The enzyme catalyses Endopeptidase of broad specificity, hydrolyzing substrates of both cathepsin L and cathepsin B.. Its function is as follows. Cysteine protease that plays an essential role in host liquefaction to facilitate horizontal transmission of the virus. May participate in the degradation of foreign protein expressed by the baculovirus system. The protein is Viral cathepsin (VCATH) of Bombyx mori (Silk moth).